The chain runs to 296 residues: Centromere protein O (296 aa).

Residues V17–R105 adopt a coiled-coil conformation.

This sequence belongs to the CENP-O/MCM21 family. In terms of assembly, component of the CENPA-CAD complex, composed of CENPI, CENPK, CENPL, CENPO, CENPP, CENPQ, CENPR and CENPS. The CENPA-CAD complex interacts with the CENPA-NAC complex, at least composed of CENPA, CENPC, CENPH, CENPM, CENPN, CENPT and CENPU.

The protein resides in the nucleus. It localises to the chromosome. The protein localises to the centromere. Its subcellular location is the kinetochore. In terms of biological role, component of the CENPA-CAD (nucleosome distal) complex, a complex recruited to centromeres which is involved in assembly of kinetochore proteins, mitotic progression and chromosome segregation. May be involved in incorporation of newly synthesized CENPA into centromeres via its interaction with the CENPA-NAC complex. Modulates the kinetochore-bound levels of NDC80 complex. The polypeptide is Centromere protein O (CENPO) (Bos taurus (Bovine)).